A 1076-amino-acid chain; its full sequence is MTTANCGAHDELDFKLVFGEDGAPTPVSQVSRPADLEPDDCASIYIFNVDPPPSTLNSSLGLPHHGLLQSHSSVLSPSFQLQGFKNYEGTDDISESKYSSLSGPKPFECPSIQITSISPNCHQETDAHEDDLHVNDPEREYLERPSRDHLYLPLEPSYRESSLSPSPASSVSSRSWFSDASSCESLSHIYDDVDSELNEAAARFTLGSPLTSPGGSPGGCPGEESWHQQYGPGHSLSPRQSPCHSPRSSITDENWLSPRPASGPSSRPTSPCGKRRHSSAEVCYAGSLSPHHSPVPSPGHSPRGSVTEDTWLTAPVHTGSGLSPAPFPFQYCVETDIPLKTRKTSDDQAAILPGKLEVCSDDQGSLSPSRETSVDDGLGSQYPLKKDSSGDQFLSVPSPFTWSKPKPGHTPIFRTSSLPPLDWPLPTHFGQCELKIEVQPKTHHRAHYETEGSRGAVKASTGGHPVVKLLGYSEKPINLQMFIGTADDRYLRPHAFYQVHRITGKTVATASQEIIIASTKVLEIPLLPENNMSASIDCAGILKLRNSDIELRKGETDIGRKNTRVRLVFRVHIPQPSGKVLSLQIASIPVECSQRSAQELPHIEKYSINSCSVNGGHEMIVTGSNFLPESKIIFLEKGQDGRPHWEAEGKIIREKCQGGHIVLEVPPYHNPAVTSAVQVHFYLCNGKRKKSQSQRFTYTPVLMKQEQREDTDLSSVPSLPVPHSAQTQRPSSDTGHPHDSALSAPRSLICPVQPAYASMITSTHLPQLQCRDEGAGKEQHIIPSSVMHQPFQVTPTSPMGSSYQSIQTNMYNGPTCLPMNPASSQEFDPVLFQQDAALSNLVNLGCQPLSPIPFHSSNSDATGHLLAHSPHSVQTPPHLQSMGYHCSSAGQRSLSSPVAAQVTGQPSSHLQPITYCPSHPGSATAASPAASHALSSSPISGPPSPQLQSMPYQSPSSGTASSPSPVTRMHSGQHSTQAQSTGQGGLSVPSSLVCHSLCDPASFPPGGAAVSIKPEPEDQEPNFATIGLQDITLDDVNEIIGRDMSQITVSQGPEVIRDAPLPGPESPDVMSSNSAQ.

Threonine 2 is modified (N-acetylthreonine). The tract at residues 110–115 (PSIQIT) is calcineurin-binding. Positions 206–307 (LGSPLTSPGG…PGHSPRGSVT (102 aa)) are disordered. A run of 2 repeats spans residues 208–224 (SPLT…PGEE) and 237–253 (SPRQ…ITDE). A 3 X SP repeats region spans residues 208-309 (SPLTSPGGSP…HSPRGSVTED (102 aa)). Residues 237–254 (SPRQSPCHSPRSSITDEN) show a composition bias toward polar residues. A compositionally biased stretch (low complexity) spans 257–271 (SPRPASGPSSRPTSP). The short motif at 274-276 (KRR) is the Nuclear localization signal element. Copy 3 of the repeat occupies 293-309 (SPVPSPGHSPRGSVTED). Position 345 is a phosphoserine (serine 345). The interval 359-390 (CSDDQGSLSPSRETSVDDGLGSQYPLKKDSSG) is disordered. Positions 362-371 (DQGSLSPSRE) are enriched in polar residues. The residue at position 373 (serine 373) is a Phosphoserine. An RHD domain is found at 416–597 (SSLPPLDWPL…IPVECSQRSA (182 aa)). The DNA-binding element occupies 445–452 (RAHYETEG). The Nuclear localization signal motif lies at 687 to 689 (KRK). Disordered regions lie at residues 700–744 (PVLM…ALSA) and 863–987 (GHLL…GGLS). Residues 713–722 (LSSVPSLPVP) are compositionally biased toward low complexity. Polar residues-rich tracts occupy residues 724–734 (SAQTQRPSSDT) and 888–911 (SAGQ…SHLQ). Composition is skewed to low complexity over residues 917–939 (PSHP…SSPI) and 946–965 (QLQS…SPSP). A compositionally biased stretch (polar residues) spans 970–981 (HSGQHSTQAQST). The Nuclear export signal motif lies at 1032 to 1041 (TLDDVNEIIG). A disordered region spans residues 1049-1076 (VSQGPEVIRDAPLPGPESPDVMSSNSAQ). Serine 1066 carries the phosphoserine modification.

NFATC proteins bind to DNA as monomers. Member of the multicomponent NFATC transcription complex that consists of at least two components, a pre-existing cytoplasmic component NFATC2 and an inducible nuclear component NFATC1. Other members such as NFATC4, or members of the activating protein-1 family, MAF, GATA4 and Cbp/p300 can also bind the complex. Component of a promoter-binding complex composed of STAT3, NFATC3 and NFATC4; complex formation is enhanced by calcineurin. Interacts with TRIM17; this interaction prevents NFATC3 nuclear localization. Interacts with and ubiquitinated by STUB1/CHIP; HSPA1A/HSP70 is required as a co-chaperone. Phosphorylated by NFATC-kinase; dephosphorylated by calcineurin. In terms of processing, ubiquitinated by STUB1/CHIP, leading to proteasomal degradation. Expressed in cardiomyocytes (at protein level).

The protein localises to the cytoplasm. It localises to the nucleus. Acts as a regulator of transcriptional activation. Binds to the TNFSF11/RANKL promoter region and promotes TNFSF11 transcription. Binding to the TNFSF11 promoter region is increased by high levels of Ca(2+) which induce NFATC3 expression and may lead to regulation of TNFSF11 expression in osteoblasts. Plays a role in promoting mesenteric arterial wall remodeling in response to the intermittent hypoxia-induced increase in EDN1 and ROCK signaling. As a result NFATC3 colocalizes with F-actin filaments, translocates to the nucleus and promotes transcription of the smooth muscle hypertrophy and differentiation marker ACTA2. Promotes lipopolysaccharide-induced apoptosis and hypertrophy in cardiomyocytes. Following JAK/STAT signaling activation and as part of a complex with NFATC4 and STAT3, binds to the alpha-beta E4 promoter region of CRYAB and activates transcription in cardiomyocytes. In conjunction with NFATC4, involved in embryonic heart development via maintenance of cardiomyocyte survival, proliferation and differentiation. Plays a role in the inducible expression of cytokine genes in T-cells, especially in the induction of the IL-2. Required for thymocyte maturation during DN3 to DN4 transition and during positive selection. Positively regulates macrophage-derived polymicrobial clearance, via binding to the promoter region and promoting transcription of NOS2 resulting in subsequent generation of nitric oxide. Involved in Ca(2+)-mediated transcriptional responses upon Ca(2+) influx via ORAI1 CRAC channels. In Rattus norvegicus (Rat), this protein is Nuclear factor of activated T-cells, cytoplasmic 3.